The chain runs to 591 residues: MMRSHYCGQLNESLEGQEITLCGWVHRRRDHGGVIFLDIRDREGMAQVVFDPDRADSFAAADRVRSEYVVKVVGKVRARPAGAVNANMASGAIEVLGYELEVLNESETPPFPLNEYSDVGEETRLRYRFIDLRRPEMAEKLRLRSRITTSIRRYLDENGFLDVETPILTRATPEGARDYLVPSRTHPGSFFALPQSPQLFKQLLMVAGFDRYYQIAKCFRDEDLRADRQPEFTQIDIETSFLNEEDIIGLTEKMVRQLFKEVLNVEFGDFPHMTFEEAMRRYGSDKPDLRNPLELVDVADQLNAVEFKVFSGPANDPKGRVAALRVPGAASMARSQIDDYTKFVSIYGAKGLAYIKVNERAKGPEGLQSPIVKFIPEENLNVILDRVGAVDGDIVFFGADKFKVVSEALGALRIKIGNDLKLHTCEWAPMWVVDFPMFEENDDGSFSALHHPFTAPKCTPEELEANPATALSRAYDMVLNGTELGGGSIRIHRKEMQQAVFRLLGIAEDEQQEKFGFLLDALKYGAPPHGGLAFGLDRLVMLMTGAQSIREVIAFPKTQSAADVMTQAPGVVDAKALRELHIRLREQPKAE.

L-aspartate is bound at residue Glu174. The segment at 198 to 201 (QLFK) is aspartate. L-aspartate is bound at residue Arg220. ATP contacts are provided by residues 220-222 (RDE) and Gln229. Residue His450 coordinates L-aspartate. Position 483 (Glu483) interacts with ATP. Arg490 is a binding site for L-aspartate. 535–538 (GLDR) is an ATP binding site.

Belongs to the class-II aminoacyl-tRNA synthetase family. Type 1 subfamily. Homodimer.

The protein localises to the cytoplasm. It catalyses the reaction tRNA(Asx) + L-aspartate + ATP = L-aspartyl-tRNA(Asx) + AMP + diphosphate. Its function is as follows. Aspartyl-tRNA synthetase with relaxed tRNA specificity since it is able to aspartylate not only its cognate tRNA(Asp) but also tRNA(Asn). Reaction proceeds in two steps: L-aspartate is first activated by ATP to form Asp-AMP and then transferred to the acceptor end of tRNA(Asp/Asn). The polypeptide is Aspartate--tRNA(Asp/Asn) ligase (Pseudomonas syringae pv. tomato (strain ATCC BAA-871 / DC3000)).